The following is a 116-amino-acid chain: uncharacterized protein (116 aa).

This is an uncharacterized protein from Acidianus filamentous virus 1 (isolate United States/Yellowstone) (AFV-1).